Consider the following 122-residue polypeptide: Short coiled-coil protein (122 aa).

The tract at residues 1-26 (MDGLNTGEEEDSAFTSISLTDDTDHS) is disordered. A coiled-coil region spans residues 43–101 (NADMDAVDAENQVELEEKTRLINQVLELQHTLEDLSARVDAVKEENLKLKSENQVLGQY).

The protein belongs to the SCOC family. Homodimer. Interacts with ARL1, ARL2 and ARL3. Directly interacts with FEZ1 and UVRAG. The interaction with UVRAG is reduced by amino acid starvation, but the complex is stabilized in the presence of FEZ1. Interacts with NRBF2.

The protein resides in the golgi apparatus membrane. It localises to the golgi apparatus. It is found in the trans-Golgi network. The protein localises to the cytoplasm. Its subcellular location is the cytosol. In terms of biological role, positive regulator of amino acid starvation-induced autophagy. The polypeptide is Short coiled-coil protein (Scoc) (Rattus norvegicus (Rat)).